A 363-amino-acid polypeptide reads, in one-letter code: Carbamoyl phosphate synthase small chain (363 aa).

The CPSase stretch occupies residues Met1–Arg172. Positions 46, 220, and 222 each coordinate L-glutamine. The Glutamine amidotransferase type-1 domain occupies Arg172–Gly359. Cys247 acts as the Nucleophile in catalysis. The L-glutamine site is built by Leu248, Gln251, Asn289, Gly291, and Tyr292. Active-site residues include His332 and Glu334.

It belongs to the CarA family. As to quaternary structure, composed of two chains; the small (or glutamine) chain promotes the hydrolysis of glutamine to ammonia, which is used by the large (or ammonia) chain to synthesize carbamoyl phosphate. Tetramer of heterodimers (alpha,beta)4.

It carries out the reaction hydrogencarbonate + L-glutamine + 2 ATP + H2O = carbamoyl phosphate + L-glutamate + 2 ADP + phosphate + 2 H(+). The catalysed reaction is L-glutamine + H2O = L-glutamate + NH4(+). Its pathway is amino-acid biosynthesis; L-arginine biosynthesis; carbamoyl phosphate from bicarbonate: step 1/1. It functions in the pathway pyrimidine metabolism; UMP biosynthesis via de novo pathway; (S)-dihydroorotate from bicarbonate: step 1/3. Small subunit of the glutamine-dependent carbamoyl phosphate synthetase (CPSase). CPSase catalyzes the formation of carbamoyl phosphate from the ammonia moiety of glutamine, carbonate, and phosphate donated by ATP, constituting the first step of 2 biosynthetic pathways, one leading to arginine and/or urea and the other to pyrimidine nucleotides. The small subunit (glutamine amidotransferase) binds and cleaves glutamine to supply the large subunit with the substrate ammonia. The chain is Carbamoyl phosphate synthase small chain from Listeria monocytogenes serotype 4b (strain F2365).